The following is a 303-amino-acid chain: Probable 5-dehydro-4-deoxyglucarate dehydratase (303 aa).

The protein belongs to the DapA family.

The catalysed reaction is 5-dehydro-4-deoxy-D-glucarate + H(+) = 2,5-dioxopentanoate + CO2 + H2O. The protein operates within carbohydrate acid metabolism; D-glucarate degradation; 2,5-dioxopentanoate from D-glucarate: step 2/2. In Acinetobacter baylyi (strain ATCC 33305 / BD413 / ADP1), this protein is Probable 5-dehydro-4-deoxyglucarate dehydratase.